Consider the following 206-residue polypeptide: Cell division protein SepF (206 aa).

The segment covering 31–53 (EEKERRKTERQEQRQAVKQEKRT) has biased composition (basic and acidic residues). The interval 31 to 81 (EEKERRKTERQEQRQAVKQEKRTFPSQRPAFSEEAPTSSSSKLSAASGSSD) is disordered. Residues 60–80 (AFSEEAPTSSSSKLSAASGSS) show a composition bias toward low complexity.

The protein belongs to the SepF family. As to quaternary structure, homodimer. Interacts with FtsZ.

It localises to the cytoplasm. Functionally, cell division protein that is part of the divisome complex and is recruited early to the Z-ring. Probably stimulates Z-ring formation, perhaps through the cross-linking of FtsZ protofilaments. Its function overlaps with FtsA. This is Cell division protein SepF from Lachnoclostridium phytofermentans (strain ATCC 700394 / DSM 18823 / ISDg) (Clostridium phytofermentans).